We begin with the raw amino-acid sequence, 397 residues long: Chorismate synthase (397 aa).

Residues Arg-40 and Arg-46 each contribute to the NADP(+) site. Residues 129 to 131, 257 to 258, Gly-302, 317 to 321, and Arg-343 each bind FMN; these read RAS, QA, and KPIAT.

The protein belongs to the chorismate synthase family. As to quaternary structure, homotetramer. It depends on FMNH2 as a cofactor.

The enzyme catalyses 5-O-(1-carboxyvinyl)-3-phosphoshikimate = chorismate + phosphate. The protein operates within metabolic intermediate biosynthesis; chorismate biosynthesis; chorismate from D-erythrose 4-phosphate and phosphoenolpyruvate: step 7/7. Catalyzes the anti-1,4-elimination of the C-3 phosphate and the C-6 proR hydrogen from 5-enolpyruvylshikimate-3-phosphate (EPSP) to yield chorismate, which is the branch point compound that serves as the starting substrate for the three terminal pathways of aromatic amino acid biosynthesis. This reaction introduces a second double bond into the aromatic ring system. This Prosthecochloris aestuarii (strain DSM 271 / SK 413) protein is Chorismate synthase.